The sequence spans 83 residues: Major outer membrane lipoprotein (83 aa).

The N-terminal stretch at Met-1 to Gly-19 is a signal peptide. The N-palmitoyl cysteine moiety is linked to residue Cys-20. Cys-20 is lipidated: S-diacylglycerol cysteine.

Its subcellular location is the cell outer membrane. The chain is Major outer membrane lipoprotein (oprI) from Pseudomonas aeruginosa (strain ATCC 15692 / DSM 22644 / CIP 104116 / JCM 14847 / LMG 12228 / 1C / PRS 101 / PAO1).